Reading from the N-terminus, the 257-residue chain is GTP cyclohydrolase 1 type 2 homolog (257 aa).

A divalent metal cation contacts are provided by His-65, Asp-103, His-221, and Glu-224.

It belongs to the GTP cyclohydrolase I type 2/NIF3 family. In terms of assembly, homohexamer.

This chain is GTP cyclohydrolase 1 type 2 homolog (ykiD), found in Lactococcus lactis subsp. lactis (strain IL1403) (Streptococcus lactis).